A 192-amino-acid polypeptide reads, in one-letter code: Soluble inorganic pyrophosphatase 2 (192 aa).

3 residues coordinate substrate: Lys-38, Arg-52, and Tyr-64. Mg(2+) contacts are provided by Asp-74, Asp-79, and Asp-111. Position 148 (Tyr-148) interacts with substrate.

Monomer. Requires Mg(2+) as cofactor. In terms of processing, the N-terminus is blocked.

The protein resides in the mitochondrion. It catalyses the reaction diphosphate + H2O = 2 phosphate + H(+). This is Soluble inorganic pyrophosphatase 2 (ppa2) from Chlamydomonas reinhardtii (Chlamydomonas smithii).